The sequence spans 475 residues: MAGSLGNLVVAGGGESSDSEEDYWDIGYMDRPPQTTKGSLATEERDETFKKALTSGDVSLVEELLNSGMSVESSFQFGWTPLMCAVNIANVELVRILLDRGANASFDKDQYTILMAACAAHASESQILKTVELLLSRNANPNVACRKCMTPVMYAAREGHAQVVALLVAHGAEINAQDENGYTALTWAARHGHKSVVLKLLELGANKTIQTKDGKTAGEIAKRNKHPELFTLLSLTVNPLQGKLQHLTKEEAICRLLTTDGDAGKEHKFSSYTAFGDLEVFLHGLGLEHMTELLKERDITLRQLLTMRKEDFTENGITNIRDQQKILDAVKELQVEEIKFGELTEVINLEISSDEFLNFLLKLNKQCGHLTTAVQNIINQLPVNSHKIVLEWGSSQRFTSVCENLVCNVEDLGEEVCKLKDLIQKLQNDQKNDPCRVLPMETYSTWNSRFLKRATFTVCGFGFLLFIFKLTFRKS.

A disordered region spans residues 1–24; the sequence is MAGSLGNLVVAGGGESSDSEEDYW. 3 positions are modified to phosphoserine: serine 16, serine 17, and serine 19. ANK repeat units lie at residues 44–73, 77–106, 109–146, 147–176, 180–209, and 213–242; these read ERDETFKKALTSGDVSLVEELLNSGMSVES, FGWTPLMCAVNIANVELVRILLDRGANASF, DQYTILMAACAAHASESQILKTVELLLSRNANPNVACR, KCMTPVMYAAREGHAQVVALLVAHGAEINA, NGYTALTWAARHGHKSVVLKLLELGANKTI, and DGKTAGEIAKRNKHPELFTLLSLTVNPLQG. The SAM domain occupies 273–336; sequence TAFGDLEVFL…LDAVKELQVE (64 aa).

In terms of assembly, interacts with DDX4, PIWIL1, RANBP9 and TDRD1.

Its subcellular location is the cytoplasm. In terms of biological role, plays a central role during spermatogenesis by repressing transposable elements and preventing their mobilization, which is essential for the germline integrity. Acts via the piRNA metabolic process, which mediates the repression of transposable elements during meiosis by forming complexes composed of piRNAs and Piwi proteins and governs the methylation and subsequent repression of transposons. Its association with pi-bodies suggests a participation in the primary piRNAs metabolic process. Required prior to the pachytene stage to facilitate the production of multiple types of piRNAs, including those associated with repeats involved in the regulation of retrotransposons. May act by mediating protein-protein interactions during germ cell maturation. This Notamacropus eugenii (Tammar wallaby) protein is Ankyrin repeat, SAM and basic leucine zipper domain-containing protein 1 (ASZ1).